The following is a 428-amino-acid chain: Histidinol dehydrogenase (428 aa).

NAD(+) contacts are provided by Y124, Q186, and N209. Positions 233, 255, and 258 each coordinate substrate. 2 residues coordinate Zn(2+): Q255 and H258. Active-site proton acceptor residues include E322 and H323. Positions 323, 356, 410, and 415 each coordinate substrate. D356 contributes to the Zn(2+) binding site. H415 provides a ligand contact to Zn(2+).

The protein belongs to the histidinol dehydrogenase family. Zn(2+) serves as cofactor.

The catalysed reaction is L-histidinol + 2 NAD(+) + H2O = L-histidine + 2 NADH + 3 H(+). It participates in amino-acid biosynthesis; L-histidine biosynthesis; L-histidine from 5-phospho-alpha-D-ribose 1-diphosphate: step 9/9. In terms of biological role, catalyzes the sequential NAD-dependent oxidations of L-histidinol to L-histidinaldehyde and then to L-histidine. The sequence is that of Histidinol dehydrogenase from Bacteroides fragilis (strain YCH46).